The following is a 58-amino-acid chain: Large ribosomal subunit protein bL32 (58 aa).

It belongs to the bacterial ribosomal protein bL32 family.

In Carboxydothermus hydrogenoformans (strain ATCC BAA-161 / DSM 6008 / Z-2901), this protein is Large ribosomal subunit protein bL32.